The sequence spans 211 residues: MELTDIRREYAKGGLRRKDLAADPIEQFNLWLEQAIEAKLTDPTAMTVATVDENGQPFQRIVLLKNVDKDGFVFYTNLGSRKAHQLEHNSKISLHFPWHPLERQVHITGTAEKLTAMENMKYFSSRPKESQLAAIASKQSSRISARGILEGKYLELKQKFAKGEIPVPSFWGGFRVRVDSIEFWQGGEHRLHDRFLFSRQDSRWDIDRLAP.

Residues 7–10 (RREY) and Lys65 each bind substrate. Residues 60–65 (RIVLLK), 75–76 (YT), Arg81, Lys82, and Gln104 each bind FMN. Substrate contacts are provided by Tyr122, Arg126, and Ser130. Residues 139 to 140 (QS) and Trp184 contribute to the FMN site. 190 to 192 (RLH) serves as a coordination point for substrate. An FMN-binding site is contributed by Arg194.

The protein belongs to the pyridoxamine 5'-phosphate oxidase family. As to quaternary structure, homodimer. FMN is required as a cofactor.

The catalysed reaction is pyridoxamine 5'-phosphate + O2 + H2O = pyridoxal 5'-phosphate + H2O2 + NH4(+). It catalyses the reaction pyridoxine 5'-phosphate + O2 = pyridoxal 5'-phosphate + H2O2. Its pathway is cofactor metabolism; pyridoxal 5'-phosphate salvage; pyridoxal 5'-phosphate from pyridoxamine 5'-phosphate: step 1/1. It functions in the pathway cofactor metabolism; pyridoxal 5'-phosphate salvage; pyridoxal 5'-phosphate from pyridoxine 5'-phosphate: step 1/1. Catalyzes the oxidation of either pyridoxine 5'-phosphate (PNP) or pyridoxamine 5'-phosphate (PMP) into pyridoxal 5'-phosphate (PLP). The sequence is that of Pyridoxine/pyridoxamine 5'-phosphate oxidase from Vibrio atlanticus (strain LGP32) (Vibrio splendidus (strain Mel32)).